The sequence spans 549 residues: Cation/acetate symporter ActP (549 aa).

Transmembrane regions (helical) follow at residues 33–53 (WQAIIMFLIFVVFTLGITYWA), 77–97 (LAIAGDYMSAASFLGISALVF), 103–123 (GLIYSLGFLVGWPIILFLIAE), 148–168 (ILSACGSLVVVALYLIAQMVG), 183–203 (IAVVLVGVLMMMYVLFGGMLA), 206–226 (WVQIIKAVLLLFGASFMAFMV), 262–282 (ISALSLGLGLMFGTAGLPHIL), 303–323 (GFMGYFYILTFIIGFGAIMLV), 355–375 (LFLGFISAVAFATILAVVAGL), 404–424 (VSKITVLILGVIAIILGVLFE), 428–448 (IAFMVGLAFAIAASCNFPIIL), 464–484 (GGWLGLITAVVLMILGPTIWV), and 493–513 (IFPYEYPALFSISVAFLGIWL).

This sequence belongs to the sodium:solute symporter (SSF) (TC 2.A.21) family.

Its subcellular location is the cell inner membrane. Functionally, transports acetate. This chain is Cation/acetate symporter ActP, found in Escherichia coli O1:K1 / APEC.